The chain runs to 470 residues: Aromatic amino acid aminotransferase C569.07 (470 aa).

Belongs to the class-I pyridoxal-phosphate-dependent aminotransferase family. Pyridoxal 5'-phosphate serves as cofactor.

The protein resides in the cytoplasm. The catalysed reaction is an aromatic L-alpha-amino acid + 2-oxoglutarate = an aromatic oxo-acid + L-glutamate. Its function is as follows. Has aromatic amino acid transaminase activity. The sequence is that of Aromatic amino acid aminotransferase C569.07 from Schizosaccharomyces pombe (strain 972 / ATCC 24843) (Fission yeast).